A 359-amino-acid polypeptide reads, in one-letter code: Alanine racemase, biosynthetic (359 aa).

K34 serves as the catalytic Proton acceptor; specific for D-alanine. Residue K34 is modified to N6-(pyridoxal phosphate)lysine. R129 is a substrate binding site. Y255 serves as the catalytic Proton acceptor; specific for L-alanine. M303 contacts substrate.

The protein belongs to the alanine racemase family. Requires pyridoxal 5'-phosphate as cofactor.

The catalysed reaction is L-alanine = D-alanine. It functions in the pathway amino-acid biosynthesis; D-alanine biosynthesis; D-alanine from L-alanine: step 1/1. Its pathway is cell wall biogenesis; peptidoglycan biosynthesis. Catalyzes the interconversion of L-alanine and D-alanine. Provides the D-alanine required for cell wall biosynthesis. In Escherichia coli O157:H7, this protein is Alanine racemase, biosynthetic (alr).